Here is a 132-residue protein sequence, read N- to C-terminus: Large ribosomal subunit protein bL17 (132 aa).

This sequence belongs to the bacterial ribosomal protein bL17 family. In terms of assembly, part of the 50S ribosomal subunit. Contacts protein L32.

The polypeptide is Large ribosomal subunit protein bL17 (Ralstonia pickettii (strain 12J)).